We begin with the raw amino-acid sequence, 472 residues long: Eukaryotic translation initiation factor 2 subunit 3 (472 aa).

An N-acetylalanine modification is found at Ala2. At Ser16 the chain carries Phosphoserine. In terms of domain architecture, tr-type G spans 39–248 (QATINIGTIG…IVKKIPVPPR (210 aa)). Residues 48 to 55 (GHVAHGKS) form a G1 region. 51–56 (AHGKST) lines the GTP pocket. The tract at residues 76 to 80 (NITIK) is G2. Positions 134–137 (DCPG) are G3. Residues 190 to 193 (NKID) and 225 to 227 (SAQ) contribute to the GTP site. Positions 190 to 193 (NKID) are G4. Positions 225–227 (SAQ) are G5. An interacts with CDC123 region spans residues 457 to 469 (GQIRRGVTIKPTV).

Belongs to the TRAFAC class translation factor GTPase superfamily. Classic translation factor GTPase family. EIF2G subfamily. As to quaternary structure, eukaryotic translation initiation factor 2 eIF2 is a heterotrimeric complex composed of an alpha (EIF2S1), a beta (EIF2S2) and a gamma (EIF2S3) chain. eIF2 is member of the 43S pre-initiation complex (43S PIC). Interacts (via C-terminus) with CDC123; the interaction is direct.

The protein resides in the cytoplasm. The protein localises to the cytosol. The catalysed reaction is GTP + H2O = GDP + phosphate + H(+). In terms of biological role, member of the eIF2 complex that functions in the early steps of protein synthesis by forming a ternary complex with GTP and initiator tRNA. This complex binds to a 40S ribosomal subunit, followed by mRNA binding to form the 43S pre-initiation complex (43S PIC). Junction of the 60S ribosomal subunit to form the 80S initiation complex is preceded by hydrolysis of the GTP bound to eIF2 and release of an eIF2-GDP binary complex. In order for eIF2 to recycle and catalyze another round of initiation, the GDP bound to eIF2 must exchange with GTP by way of a reaction catalyzed by eIF-2B. The sequence is that of Eukaryotic translation initiation factor 2 subunit 3 (EIF2S3) from Sus scrofa (Pig).